Consider the following 362-residue polypeptide: Glutamine synthetase (362 aa).

In terms of domain architecture, GS beta-grasp spans Leu26–Gly107. Residues His114 to Glu362 form the GS catalytic domain.

The protein belongs to the glutamine synthetase family. In terms of assembly, homooctamer.

The protein localises to the cytoplasm. It catalyses the reaction L-glutamate + NH4(+) + ATP = L-glutamine + ADP + phosphate + H(+). The chain is Glutamine synthetase (gln-1) from Neurospora crassa (strain ATCC 24698 / 74-OR23-1A / CBS 708.71 / DSM 1257 / FGSC 987).